The following is a 78-amino-acid chain: U23-theraphotoxin-Cg1a 1 (78 aa).

The signal sequence occupies residues 1–21 (MKTSVLVTVLGLAVISVLCSA). A propeptide spanning residues 22 to 49 (SQDEEQDMYDELLSAVFEVNDELQSEAR) is cleaved from the precursor. Disulfide bonds link C50–C64, C57–C69, and C63–C75.

This sequence belongs to the neurotoxin 10 (Hwtx-1) family. 64 (Jztx-20) subfamily. As to expression, expressed by the venom gland.

The protein localises to the secreted. In terms of biological role, probable ion channel inhibitor. The polypeptide is U23-theraphotoxin-Cg1a 1 (Chilobrachys guangxiensis (Chinese earth tiger tarantula)).